We begin with the raw amino-acid sequence, 209 residues long: Thiamine-phosphate synthase (209 aa).

4-amino-2-methyl-5-(diphosphooxymethyl)pyrimidine contacts are provided by residues 38–42 (QYRDK) and N70. 2 residues coordinate Mg(2+): D71 and D89. T108 serves as a coordination point for 4-amino-2-methyl-5-(diphosphooxymethyl)pyrimidine. 2-[(2R,5Z)-2-carboxy-4-methylthiazol-5(2H)-ylidene]ethyl phosphate is bound at residue 135–137 (SNT). K138 is a binding site for 4-amino-2-methyl-5-(diphosphooxymethyl)pyrimidine. G165 is a 2-[(2R,5Z)-2-carboxy-4-methylthiazol-5(2H)-ylidene]ethyl phosphate binding site.

It belongs to the thiamine-phosphate synthase family. Mg(2+) is required as a cofactor.

The catalysed reaction is 2-[(2R,5Z)-2-carboxy-4-methylthiazol-5(2H)-ylidene]ethyl phosphate + 4-amino-2-methyl-5-(diphosphooxymethyl)pyrimidine + 2 H(+) = thiamine phosphate + CO2 + diphosphate. The enzyme catalyses 2-(2-carboxy-4-methylthiazol-5-yl)ethyl phosphate + 4-amino-2-methyl-5-(diphosphooxymethyl)pyrimidine + 2 H(+) = thiamine phosphate + CO2 + diphosphate. It carries out the reaction 4-methyl-5-(2-phosphooxyethyl)-thiazole + 4-amino-2-methyl-5-(diphosphooxymethyl)pyrimidine + H(+) = thiamine phosphate + diphosphate. Its pathway is cofactor biosynthesis; thiamine diphosphate biosynthesis; thiamine phosphate from 4-amino-2-methyl-5-diphosphomethylpyrimidine and 4-methyl-5-(2-phosphoethyl)-thiazole: step 1/1. Condenses 4-methyl-5-(beta-hydroxyethyl)thiazole monophosphate (THZ-P) and 2-methyl-4-amino-5-hydroxymethyl pyrimidine pyrophosphate (HMP-PP) to form thiamine monophosphate (TMP). This is Thiamine-phosphate synthase from Ectopseudomonas mendocina (strain ymp) (Pseudomonas mendocina).